The chain runs to 649 residues: Putative cystathionine gamma-synthase YML082W (649 aa).

The tract at residues 242–273 (NEANHGEDHDGGISGEVDSQEEPHNGLVSTIP) is disordered. The residue at position 287 (S287) is a Phosphoserine. K451 carries the post-translational modification N6-(pyridoxal phosphate)lysine.

Belongs to the trans-sulfuration enzymes family. MET7 subfamily. Requires pyridoxal 5'-phosphate as cofactor.

It carries out the reaction O-succinyl-L-homoserine + L-cysteine = L,L-cystathionine + succinate + H(+). It functions in the pathway amino-acid biosynthesis; L-methionine biosynthesis via de novo pathway; L-cystathionine from O-succinyl-L-homoserine: step 1/1. Catalyzes the formation of L-cystathionine from O-succinyl-L-homoserine (OSHS) and L-cysteine, via a gamma-replacement reaction. In the absence of thiol, catalyzes gamma-elimination to form 2-oxobutanoate, succinate and ammonia. The sequence is that of Putative cystathionine gamma-synthase YML082W from Saccharomyces cerevisiae (strain ATCC 204508 / S288c) (Baker's yeast).